A 1045-amino-acid polypeptide reads, in one-letter code: B3 domain-containing protein REM13 (1045 aa).

The segment at residues 7-96 (YPQFFHTLVP…VFHVSNLGPN (90 aa)) is a DNA-binding region (TF-B3 1). A disordered region spans residues 121–147 (NNGDVCDSEELPKEKKAKTNSEEADAV). Residues 130–141 (ELPKEKKAKTNS) show a composition bias toward basic and acidic residues. 2 DNA-binding regions (TF-B3) span residues 157-253 (CFMA…FCPT) and 305-398 (FVTF…CSPE). The interval 423–449 (NRDKISNNDKEENMSWERKKDHLKSRD) is disordered. The segment at residues 474–570 (SNDSCLVVVS…TPVLSLCPAD (97 aa)) is a DNA-binding region (TF-B3 4). A disordered region spans residues 606 to 625 (IKDDNSKEKNDKEESKSVDG). 3 consecutive DNA-binding regions (TF-B3) follow at residues 643–738 (FVTL…LRTE), 815–910 (FVTF…LRTK), and 940–1035 (FVTL…LKFS).

Its subcellular location is the nucleus. This chain is B3 domain-containing protein REM13 (REM13), found in Arabidopsis thaliana (Mouse-ear cress).